The primary structure comprises 411 residues: MSDVSSKEIYEVKKTLKELEDKKGRGTELVSVYIPPEKQISDVAKQMRDELGQSANIKSKQTRKNVQSAIEVIIQRLKLFPKPPEKGLVMFVGMIPKGGPGTEKMETYVFQPPEAVQTYTYHCDSQFFVEPLKQIIEYKEVYGVVVLDRKESTIATLRGKRIDIIKHLTSGVPGKHKAGGQSQRRFDRVIELAAHEFLKRIGRHVDEAFLPLKDELKGVLIGGPGHTKNDFVDGEYIHYEIHDKIINIVDTSYTGDFGIREVIDESADTLDEMDIMQEKKFMRKFLTGLISESGLSTYGEKEVRQNLQMGAVETLLISENLKSKRQTYTCPACNTVDVITTRQHQEPPEKRCPKCNEVMKITKTQETAEELIELAEEVKTHVEVISIETEEGTQLDKAFGGIAGILRYKVK.

It belongs to the eukaryotic release factor 1 family. As to quaternary structure, heterodimer of two subunits, one of which binds GTP.

It is found in the cytoplasm. Functionally, directs the termination of nascent peptide synthesis (translation) in response to the termination codons UAA, UAG and UGA. The chain is Peptide chain release factor subunit 1 from Methanosphaera stadtmanae (strain ATCC 43021 / DSM 3091 / JCM 11832 / MCB-3).